Here is a 315-residue protein sequence, read N- to C-terminus: 4-hydroxy-3-methylbut-2-enyl diphosphate reductase (315 aa).

[4Fe-4S] cluster is bound at residue Cys12. (2E)-4-hydroxy-3-methylbut-2-enyl diphosphate is bound by residues His41 and His74. The dimethylallyl diphosphate site is built by His41 and His74. Isopentenyl diphosphate contacts are provided by His41 and His74. Position 96 (Cys96) interacts with [4Fe-4S] cluster. Residue His124 participates in (2E)-4-hydroxy-3-methylbut-2-enyl diphosphate binding. His124 lines the dimethylallyl diphosphate pocket. His124 lines the isopentenyl diphosphate pocket. The active-site Proton donor is Glu126. Thr168 lines the (2E)-4-hydroxy-3-methylbut-2-enyl diphosphate pocket. Cys198 lines the [4Fe-4S] cluster pocket. 4 residues coordinate (2E)-4-hydroxy-3-methylbut-2-enyl diphosphate: Ser226, Ser227, Asn228, and Ser270. Positions 226, 227, 228, and 270 each coordinate dimethylallyl diphosphate. Isopentenyl diphosphate contacts are provided by Ser226, Ser227, Asn228, and Ser270.

This sequence belongs to the IspH family. [4Fe-4S] cluster serves as cofactor.

The catalysed reaction is isopentenyl diphosphate + 2 oxidized [2Fe-2S]-[ferredoxin] + H2O = (2E)-4-hydroxy-3-methylbut-2-enyl diphosphate + 2 reduced [2Fe-2S]-[ferredoxin] + 2 H(+). It carries out the reaction dimethylallyl diphosphate + 2 oxidized [2Fe-2S]-[ferredoxin] + H2O = (2E)-4-hydroxy-3-methylbut-2-enyl diphosphate + 2 reduced [2Fe-2S]-[ferredoxin] + 2 H(+). It participates in isoprenoid biosynthesis; dimethylallyl diphosphate biosynthesis; dimethylallyl diphosphate from (2E)-4-hydroxy-3-methylbutenyl diphosphate: step 1/1. It functions in the pathway isoprenoid biosynthesis; isopentenyl diphosphate biosynthesis via DXP pathway; isopentenyl diphosphate from 1-deoxy-D-xylulose 5-phosphate: step 6/6. Catalyzes the conversion of 1-hydroxy-2-methyl-2-(E)-butenyl 4-diphosphate (HMBPP) into a mixture of isopentenyl diphosphate (IPP) and dimethylallyl diphosphate (DMAPP). Acts in the terminal step of the DOXP/MEP pathway for isoprenoid precursor biosynthesis. The sequence is that of 4-hydroxy-3-methylbut-2-enyl diphosphate reductase from Pseudomonas syringae pv. tomato (strain ATCC BAA-871 / DC3000).